The sequence spans 272 residues: Type II secretion system protein C (272 aa).

Residues M1 to R16 are Cytoplasmic-facing. Residues I17–W35 traverse the membrane as a helical segment. Topologically, residues R36–E272 are periplasmic.

This sequence belongs to the GSP C family.

Its subcellular location is the cell inner membrane. Involved in a type II secretion system (T2SS, formerly general secretion pathway, GSP) for the export of proteins. Required for the translocation of the multiple pectic enzymes. The chain is Type II secretion system protein C (outC) from Dickeya dadantii (strain 3937) (Erwinia chrysanthemi (strain 3937)).